Consider the following 62-residue polypeptide: Short neurotoxin C (62 aa).

Positions 1–16 (RRCFNQQSSQPQTNKS) are enriched in polar residues. The disordered stretch occupies residues 1–21 (RRCFNQQSSQPQTNKSCPPGE). 4 cysteine pairs are disulfide-bonded: Cys-3/Cys-24, Cys-17/Cys-41, Cys-43/Cys-54, and Cys-55/Cys-60.

It belongs to the three-finger toxin family. Short-chain subfamily. Type I alpha-neurotoxin sub-subfamily. As to expression, expressed by the venom gland.

The protein localises to the secreted. Its function is as follows. Binds to muscle nicotinic acetylcholine receptor (nAChR) and inhibit acetylcholine from binding to the receptor, thereby impairing neuromuscular transmission. The chain is Short neurotoxin C from Laticauda crockeri (Crocker's sea snake).